The chain runs to 501 residues: MKKRALISVFDKDGVLELAKFLRDRDVEIISSGGTYKYLKENNIEVKEISEITDFPEMLDGRVKTLHPLVHAGILAIRDNKEHMKTLEEREINTIDYVVVNLYPFFEKVRENLSFEEKVEFIDIGGPTMLRAAAKNFKDVVVLSDKKDYEKVMNEIKENNCVSFKLRKTLAGKVFNLMSAYDAAISNFLLEGEEEYPEYLSVSYKKIQDLRYGENPHQGAAYYSSTEFDGAMNSFEILNGKALSYNNIKDLDIAWKVACEFEETACCALKHNTPCGVAVGENSKEVYLKAYDADPVSIFGGIVAINRKIDKATAEEMVKIFLEVVAAPDFDEDALEVLRTKKNLRVIKCKNTPQAKNYMVTVDGGILVQGEDNKLANEYKVVTEKEPTEMELRDMIFGMKVVKYVKSNAIVVVKDGVATGIGGGQVNRIWATKEALERGKGGAVLASDAFFPFRDCVDEAAKNGIKAIIQPGGSIRDEESIEACNEHGISMVFTGVRHFKH.

The MGS-like domain occupies Met-1–Ser-144.

The protein belongs to the PurH family.

The catalysed reaction is (6R)-10-formyltetrahydrofolate + 5-amino-1-(5-phospho-beta-D-ribosyl)imidazole-4-carboxamide = 5-formamido-1-(5-phospho-D-ribosyl)imidazole-4-carboxamide + (6S)-5,6,7,8-tetrahydrofolate. It catalyses the reaction IMP + H2O = 5-formamido-1-(5-phospho-D-ribosyl)imidazole-4-carboxamide. The protein operates within purine metabolism; IMP biosynthesis via de novo pathway; 5-formamido-1-(5-phospho-D-ribosyl)imidazole-4-carboxamide from 5-amino-1-(5-phospho-D-ribosyl)imidazole-4-carboxamide (10-formyl THF route): step 1/1. Its pathway is purine metabolism; IMP biosynthesis via de novo pathway; IMP from 5-formamido-1-(5-phospho-D-ribosyl)imidazole-4-carboxamide: step 1/1. The chain is Bifunctional purine biosynthesis protein PurH from Clostridium perfringens (strain ATCC 13124 / DSM 756 / JCM 1290 / NCIMB 6125 / NCTC 8237 / Type A).